Reading from the N-terminus, the 556-residue chain is Formate--tetrahydrofolate ligase (556 aa).

65 to 72 (TPAGEGKS) lines the ATP pocket.

Belongs to the formate--tetrahydrofolate ligase family.

It catalyses the reaction (6S)-5,6,7,8-tetrahydrofolate + formate + ATP = (6R)-10-formyltetrahydrofolate + ADP + phosphate. Its pathway is one-carbon metabolism; tetrahydrofolate interconversion. This Streptococcus thermophilus (strain ATCC BAA-491 / LMD-9) protein is Formate--tetrahydrofolate ligase.